We begin with the raw amino-acid sequence, 117 residues long: RutC family protein HD_0322 (117 aa).

Belongs to the RutC family.

The protein is RutC family protein HD_0322 of Haemophilus ducreyi (strain 35000HP / ATCC 700724).